The following is a 393-amino-acid chain: Probable acetyl-CoA acyltransferase (393 aa).

The active-site Acyl-thioester intermediate is Cys-88. Residues His-349 and Cys-378 each act as proton acceptor in the active site.

This sequence belongs to the thiolase-like superfamily. Thiolase family.

It localises to the cytoplasm. The catalysed reaction is 2 acetyl-CoA = acetoacetyl-CoA + CoA. This chain is Probable acetyl-CoA acyltransferase, found in Staphylococcus aureus (strain NCTC 8325 / PS 47).